The following is a 232-amino-acid chain: Ubiquinone biosynthesis O-methyltransferase (232 aa).

R36, G55, D76, and L120 together coordinate S-adenosyl-L-methionine.

This sequence belongs to the methyltransferase superfamily. UbiG/COQ3 family.

It carries out the reaction a 3-demethylubiquinol + S-adenosyl-L-methionine = a ubiquinol + S-adenosyl-L-homocysteine + H(+). The enzyme catalyses a 3-(all-trans-polyprenyl)benzene-1,2-diol + S-adenosyl-L-methionine = a 2-methoxy-6-(all-trans-polyprenyl)phenol + S-adenosyl-L-homocysteine + H(+). It participates in cofactor biosynthesis; ubiquinone biosynthesis. Functionally, O-methyltransferase that catalyzes the 2 O-methylation steps in the ubiquinone biosynthetic pathway. In Pseudomonas putida (strain ATCC 700007 / DSM 6899 / JCM 31910 / BCRC 17059 / LMG 24140 / F1), this protein is Ubiquinone biosynthesis O-methyltransferase.